A 481-amino-acid polypeptide reads, in one-letter code: Glutamate--tRNA ligase (481 aa).

The short motif at 9–19 (PSPTGNLHIGT) is the 'HIGH' region element. The 'KMSKS' region signature appears at 249-253 (KLSKR). ATP is bound at residue K252.

The protein belongs to the class-I aminoacyl-tRNA synthetase family. Glutamate--tRNA ligase type 1 subfamily. Monomer.

The protein localises to the cytoplasm. It carries out the reaction tRNA(Glu) + L-glutamate + ATP = L-glutamyl-tRNA(Glu) + AMP + diphosphate. In terms of biological role, catalyzes the attachment of glutamate to tRNA(Glu) in a two-step reaction: glutamate is first activated by ATP to form Glu-AMP and then transferred to the acceptor end of tRNA(Glu). This Picosynechococcus sp. (strain ATCC 27264 / PCC 7002 / PR-6) (Agmenellum quadruplicatum) protein is Glutamate--tRNA ligase.